The chain runs to 277 residues: 4-hydroxy-3-methylbut-2-enyl diphosphate reductase (277 aa).

Cys-12 is a binding site for [4Fe-4S] cluster. 2 residues coordinate (2E)-4-hydroxy-3-methylbut-2-enyl diphosphate: His-36 and His-70. Positions 36 and 70 each coordinate dimethylallyl diphosphate. Isopentenyl diphosphate-binding residues include His-36 and His-70. Position 92 (Cys-92) interacts with [4Fe-4S] cluster. (2E)-4-hydroxy-3-methylbut-2-enyl diphosphate is bound at residue His-120. His-120 contacts dimethylallyl diphosphate. His-120 provides a ligand contact to isopentenyl diphosphate. Catalysis depends on Glu-122, which acts as the Proton donor. Thr-158 is a (2E)-4-hydroxy-3-methylbut-2-enyl diphosphate binding site. Residue Cys-186 coordinates [4Fe-4S] cluster. The (2E)-4-hydroxy-3-methylbut-2-enyl diphosphate site is built by Ser-214, Asn-216, and Ser-258. Dimethylallyl diphosphate is bound by residues Ser-214, Asn-216, and Ser-258. Residues Ser-214, Asn-216, and Ser-258 each contribute to the isopentenyl diphosphate site.

It belongs to the IspH family. [4Fe-4S] cluster serves as cofactor.

The catalysed reaction is isopentenyl diphosphate + 2 oxidized [2Fe-2S]-[ferredoxin] + H2O = (2E)-4-hydroxy-3-methylbut-2-enyl diphosphate + 2 reduced [2Fe-2S]-[ferredoxin] + 2 H(+). It catalyses the reaction dimethylallyl diphosphate + 2 oxidized [2Fe-2S]-[ferredoxin] + H2O = (2E)-4-hydroxy-3-methylbut-2-enyl diphosphate + 2 reduced [2Fe-2S]-[ferredoxin] + 2 H(+). The protein operates within isoprenoid biosynthesis; dimethylallyl diphosphate biosynthesis; dimethylallyl diphosphate from (2E)-4-hydroxy-3-methylbutenyl diphosphate: step 1/1. It functions in the pathway isoprenoid biosynthesis; isopentenyl diphosphate biosynthesis via DXP pathway; isopentenyl diphosphate from 1-deoxy-D-xylulose 5-phosphate: step 6/6. Functionally, catalyzes the conversion of 1-hydroxy-2-methyl-2-(E)-butenyl 4-diphosphate (HMBPP) into a mixture of isopentenyl diphosphate (IPP) and dimethylallyl diphosphate (DMAPP). Acts in the terminal step of the DOXP/MEP pathway for isoprenoid precursor biosynthesis. This Campylobacter jejuni subsp. doylei (strain ATCC BAA-1458 / RM4099 / 269.97) protein is 4-hydroxy-3-methylbut-2-enyl diphosphate reductase.